The primary structure comprises 505 residues: Maturase K (505 aa).

It belongs to the intron maturase 2 family. MatK subfamily.

The protein localises to the plastid. It localises to the chloroplast. Its function is as follows. Usually encoded in the trnK tRNA gene intron. Probably assists in splicing its own and other chloroplast group II introns. The sequence is that of Maturase K from Phaulothamnus spinescens (Snake-eyes).